Reading from the N-terminus, the 63-residue chain is Large ribosomal subunit protein bL28 (63 aa).

The protein belongs to the bacterial ribosomal protein bL28 family.

The polypeptide is Large ribosomal subunit protein bL28 (Desulfitobacterium hafniense (strain DSM 10664 / DCB-2)).